The following is a 208-amino-acid chain: Recombination protein RecR (208 aa).

The segment at 60 to 75 (CKVCHNICDDEVCSIC) adopts a C4-type zinc-finger fold. Residues 83-178 (SLVCVVENIK…RISVIARGVS (96 aa)) form the Toprim domain.

It belongs to the RecR family.

Its function is as follows. May play a role in DNA repair. It seems to be involved in an RecBC-independent recombinational process of DNA repair. It may act with RecF and RecO. This is Recombination protein RecR from Parabacteroides distasonis (strain ATCC 8503 / DSM 20701 / CIP 104284 / JCM 5825 / NCTC 11152).